Here is a 125-residue protein sequence, read N- to C-terminus: Cu-Zn superoxide dismutase-like protein OPG175 (125 aa).

A disulfide bond links C52 and C102.

The protein belongs to the Cu-Zn superoxide dismutase family.

It is found in the virion. The protein resides in the host cytoplasm. Its function is as follows. Superoxide dismutase-like protein with no enzymatic activity. The chain is Cu-Zn superoxide dismutase-like protein OPG175 (OPG175) from Cowpox virus (strain Brighton Red) (CPV).